The following is an 85-amino-acid chain: U4-theraphotoxin-Hhn1a (85 aa).

An N-terminal signal peptide occupies residues 1-22 (MKVTLIAILTCAAALVLHTTAA). Residues 23 to 48 (EELEAESQLMEVGMPDTELAAVDEER) constitute a propeptide that is removed on maturation. Disulfide bonds link C52/C66, C56/C77, and C71/C82.

It belongs to the neurotoxin 12 (Hwtx-2) family. 02 (Hwtx-2) subfamily. Monomer. Expressed by the venom gland.

The protein localises to the secreted. Functionally, neurotoxin active on both insects and mammals. The chain is U4-theraphotoxin-Hhn1a from Cyriopagopus hainanus (Chinese bird spider).